The sequence spans 374 residues: P2Y purinoceptor 11 (374 aa).

The Extracellular segment spans residues 1 to 29 (MAANVSGAKSCPANFLAAADDKLSGFQGD). Asparagine 4 is a glycosylation site (N-linked (GlcNAc...) asparagine). Residues 30 to 50 (FLWPILVVEFLVAVASNGLAL) form a helical membrane-spanning segment. Over 51–64 (YRFSIRKQRPWHPA) the chain is Cytoplasmic. A helical membrane pass occupies residues 65–85 (VVFSVQLAVSDLLCALTLPPL). Residues 86–116 (AAYLYPPKHWRYGEAACRLERFLFTCNLLGS) are Extracellular-facing. A disulfide bridge connects residues cysteine 102 and cysteine 180. A helical membrane pass occupies residues 117-137 (VIFITCISLNRYLGIVHPFFA). Over 138-146 (RSHLRPKHA) the chain is Cytoplasmic. A helical membrane pass occupies residues 147–167 (WAVSAAGWVLAALLAMPTLSF). At 168–206 (SHLKRPQQGAGNCSVARPEACIKCLGTADHGLAAYRAYS) the chain is on the extracellular side. Asparagine 179 carries an N-linked (GlcNAc...) asparagine glycan. Residues 207–227 (LVLAGLGCGLPLLLTLAAYGA) traverse the membrane as a helical segment. Over 228 to 245 (LGRAVLRSPGMTVAEKLR) the chain is Cytoplasmic. The helical transmembrane segment at 246 to 266 (VAALVASGVALYASSYVPYHI) threads the bilayer. At 267-308 (MRVLNVDARRRWSTRCPSFADIAQATAALELGPYVGYQVMRG) the chain is on the extracellular side. The helical transmembrane segment at 309–329 (LMPLAFCVHPLLYMAAVPSLG) threads the bilayer. Residues 330–374 (CCCRHCPGYRDSWNPEDAKSTGQALPLNATAAPKPSEPQSRELSQ) are Cytoplasmic-facing. Residues 345–374 (EDAKSTGQALPLNATAAPKPSEPQSRELSQ) form a disordered region.

This sequence belongs to the G-protein coupled receptor 1 family. In terms of tissue distribution, highest expression in liver and spleen.

The protein resides in the cell membrane. Receptor for ATP and ADP coupled to G-proteins that activate both phosphatidylinositol-calcium and adenylyl cyclase second messenger systems. Not activated by UTP or UDP. The sequence is that of P2Y purinoceptor 11 (P2RY11) from Homo sapiens (Human).